Consider the following 751-residue polypeptide: Catalase-peroxidase (751 aa).

The tract at residues 1 to 21 is disordered; that stretch reads MSNESKCPFHQTAGGGTTNRD. The segment at residues 90–244 is a cross-link (tryptophyl-tyrosyl-methioninium (Trp-Tyr) (with M-270)); sequence WHSAGTYRIG…LAAVQMGLIY (155 aa). His91 serves as the catalytic Proton acceptor. A cross-link (tryptophyl-tyrosyl-methioninium (Tyr-Met) (with W-90)) is located at residues 244-270; sequence YVNPEGPEGNPDPVASGKDIRETFGRM. Heme b is bound at residue His285. Positions 365 to 390 are disordered; the sequence is AHQWRPKEGKGAGTVPDAHDPGKKHA.

It belongs to the peroxidase family. Peroxidase/catalase subfamily. Homodimer or homotetramer. It depends on heme b as a cofactor. Formation of the three residue Trp-Tyr-Met cross-link is important for the catalase, but not the peroxidase activity of the enzyme.

The catalysed reaction is H2O2 + AH2 = A + 2 H2O. The enzyme catalyses 2 H2O2 = O2 + 2 H2O. Functionally, bifunctional enzyme with both catalase and broad-spectrum peroxidase activity. The protein is Catalase-peroxidase of Pseudomonas putida (strain GB-1).